A 743-amino-acid chain; its full sequence is Dolichyl-phosphate-mannose--protein mannosyltransferase 5 (743 aa).

Over 1–46 (MNKEHLLKVDPIPDVTIKRGPLRSFLITKPCDNLSSLRTVTSSKEK) the chain is Lumenal. An N-linked (GlcNAc...) asparagine glycan is attached at N33. The chain crosses the membrane as a helical span at residues 47-67 (LLVGCLLIFTAIVRLHNISLP). Residues 68–129 (NSVVFGENEV…IGTEYTANVP (62 aa)) are Cytoplasmic-facing. Residues 130–150 (YVAMRFFSATLGIVSVLVLYL) traverse the membrane as a helical segment. The Lumenal segment spans residues 151-158 (TLRVSGVK). A helical transmembrane segment spans residues 159 to 179 (IAVAAICAVCFAIENSFVTLS). Residue R180 is a topological domain, cytoplasmic. A helical transmembrane segment spans residues 181-201 (FTLIEGPFVFFMACAVYFFRR). Residues 202-231 (SELYLPNSCKANKSLLAASIALGFAVSSKW) are Lumenal-facing. Residue N213 is glycosylated (N-linked (GlcNAc...) asparagine). Residues 232 to 252 (AGLFTIAWAGIIVLWRVWFMI) traverse the membrane as a helical segment. The Cytoplasmic portion of the chain corresponds to 253–264 (GDLSRPIGSSIK). Residues 265-285 (YMAFQFTCLLAIPAFIYFLIF) traverse the membrane as a helical segment. Topologically, residues 286–583 (SVHIKTLNVN…GREVYFLGNA (298 aa)) are lumenal. Residues 320 to 374 (VAEVAVGSAVSLNHVGTAGGYLHSHLHNYPAGSMQQQVTLYPHIDQNNKWIIELA) enclose the MIR 1 domain. N-linked (GlcNAc...) asparagine glycans are attached at residues N380 and N386. MIR domains follow at residues 384 to 444 (FQNL…IEID) and 454 to 510 (QEHI…IEEN). Residues 584-604 (VLWWSVTAFICTFIIGVAVEL) traverse the membrane as a helical segment. Residues 605-623 (LAWKLGVNILRDKHIINFH) lie on the Cytoplasmic side of the membrane. The chain crosses the membrane as a helical span at residues 624–644 (YQVFQYLLGFAAHYFPYFFVG). The Lumenal portion of the chain corresponds to 645 to 646 (QK). The chain crosses the membrane as a helical span at residues 647 to 667 (LFLYDYLPAYYFGILAFGHAL). Topologically, residues 668–683 (DLISTYISNKRNNTGY) are cytoplasmic. Residues 684–704 (IVVAIFMVVCFYFFSEHSPLI) traverse the membrane as a helical segment. Over 705–743 (YATGWSSNLCKRSKWLGSWDFYCNSLLLSDSHYELNAES) the chain is Lumenal.

It belongs to the glycosyltransferase 39 family. In terms of assembly, PMT3 and PMT5 form a functional heterodimer. Also forms a minor complex with PMT2.

It localises to the endoplasmic reticulum membrane. It catalyses the reaction a di-trans,poly-cis-dolichyl beta-D-mannosyl phosphate + L-seryl-[protein] = 3-O-(alpha-D-mannosyl)-L-seryl-[protein] + a di-trans,poly-cis-dolichyl phosphate + H(+). The catalysed reaction is a di-trans,poly-cis-dolichyl beta-D-mannosyl phosphate + L-threonyl-[protein] = 3-O-(alpha-D-mannosyl)-L-threonyl-[protein] + a di-trans,poly-cis-dolichyl phosphate + H(+). It participates in protein modification; protein glycosylation. Functionally, protein O-mannosyltransferase involved in O-glycosylation which is essential for cell wall rigidity. Forms a heterodimeric complex with PMT3 and more rarely with PMT2 to transfer mannose from Dol-P-mannose to Ser or Thr residues on proteins. This chain is Dolichyl-phosphate-mannose--protein mannosyltransferase 5, found in Saccharomyces cerevisiae (strain ATCC 204508 / S288c) (Baker's yeast).